The chain runs to 242 residues: Glucosamine-6-phosphate deaminase (242 aa).

Residue Asp-67 is the Proton acceptor; for enolization step of the active site. The active-site For ring-opening step is Asn-136. The active-site Proton acceptor; for ring-opening step is the His-138. Catalysis depends on Glu-143, which acts as the For ring-opening step.

It belongs to the glucosamine/galactosamine-6-phosphate isomerase family. NagB subfamily.

It catalyses the reaction alpha-D-glucosamine 6-phosphate + H2O = beta-D-fructose 6-phosphate + NH4(+). It functions in the pathway amino-sugar metabolism; N-acetylneuraminate degradation; D-fructose 6-phosphate from N-acetylneuraminate: step 5/5. In terms of biological role, catalyzes the reversible isomerization-deamination of glucosamine 6-phosphate (GlcN6P) to form fructose 6-phosphate (Fru6P) and ammonium ion. This Clostridium beijerinckii (strain ATCC 51743 / NCIMB 8052) (Clostridium acetobutylicum) protein is Glucosamine-6-phosphate deaminase.